We begin with the raw amino-acid sequence, 243 residues long: Cell division protein FtsQ (243 aa).

Over 1-19 (MKRYNAKRKTHRNLKSIKK) the chain is Cytoplasmic. Residues 20–40 (LIPTVLALLAFVSLLAGIITL) traverse the membrane as a helical segment. The Periplasmic segment spans residues 41-243 (HNPKTLPFRQ…SNGLAIQWKN (203 aa)). Residues 46–115 (LPFRQIKITV…NELEIQVEEQ (70 aa)) form the POTRA domain.

It belongs to the FtsQ/DivIB family. FtsQ subfamily. Part of a complex composed of FtsB, FtsL and FtsQ.

It localises to the cell inner membrane. Its function is as follows. Essential cell division protein. May link together the upstream cell division proteins, which are predominantly cytoplasmic, with the downstream cell division proteins, which are predominantly periplasmic. May control correct divisome assembly. The polypeptide is Cell division protein FtsQ (Coxiella burnetii (strain RSA 493 / Nine Mile phase I)).